A 906-amino-acid polypeptide reads, in one-letter code: Protein translocase subunit SecA (906 aa).

Residues Gln-86, 104 to 108, and Asp-511 contribute to the ATP site; that span reads GEGKT. Composition is skewed to basic and acidic residues over residues 853–865 and 877–888; these read HESV…RHDE and VRREGPKVKRND. The interval 853–906 is disordered; the sequence is HESVIDNNQRHDEDEQEEAPKVQQVRREGPKVKRNDPCPCGSGKKYKQCHGKVE. Zn(2+)-binding residues include Cys-890, Cys-892, Cys-901, and His-902. The segment covering 896–906 has biased composition (basic residues); that stretch reads KKYKQCHGKVE.

It belongs to the SecA family. Monomer and homodimer. Part of the essential Sec protein translocation apparatus which comprises SecA, SecYEG and auxiliary proteins SecDF-YajC and YidC. Zn(2+) serves as cofactor.

The protein resides in the cell inner membrane. It is found in the cytoplasm. It carries out the reaction ATP + H2O + cellular proteinSide 1 = ADP + phosphate + cellular proteinSide 2.. In terms of biological role, part of the Sec protein translocase complex. Interacts with the SecYEG preprotein conducting channel. Has a central role in coupling the hydrolysis of ATP to the transfer of proteins into and across the cell membrane, serving both as a receptor for the preprotein-SecB complex and as an ATP-driven molecular motor driving the stepwise translocation of polypeptide chains across the membrane. The sequence is that of Protein translocase subunit SecA from Francisella tularensis subsp. holarctica (strain OSU18).